A 374-amino-acid chain; its full sequence is 4-galactosyl-N-acetylglucosaminide 3-alpha-L-fucosyltransferase FUT5 (374 aa).

Topologically, residues 1 to 15 (MDPLGPAKPQWLWRR) are cytoplasmic. Residues 16–34 (CLAGLLFQLLVAVCFFSYL) traverse the membrane as a helical; Signal-anchor for type II membrane protein segment. The Lumenal segment spans residues 35–374 (RVSQDHATGS…TVRSIAAWFT (340 aa)). Residues N60, N105, N167, and N198 are each glycosylated (N-linked (GlcNAc...) asparagine).

It belongs to the glycosyltransferase 10 family.

It is found in the golgi apparatus. It localises to the golgi stack membrane. The catalysed reaction is a beta-D-galactosyl-(1-&gt;3)-N-acetyl-beta-D-glucosaminyl derivative + GDP-beta-L-fucose = a beta-D-galactosyl-(1-&gt;3)-[alpha-L-fucosyl-(1-&gt;4)]-N-acetyl-beta-D-glucosaminyl derivative + GDP + H(+). It catalyses the reaction an N-acetyl-alpha-neuraminyl-(2-&gt;3)-beta-D-galactosyl-(1-&gt;4)-N-acetyl-beta-D-glucosaminyl derivative + GDP-beta-L-fucose = an alpha-Neu5Ac-(2-&gt;3)-beta-D-Gal-(1-&gt;4)-[alpha-L-Fuc-(1-&gt;3)]-beta-D-GlcNAc derivative + GDP + H(+). The enzyme catalyses an alpha-Neu5Ac-(2-&gt;3)-beta-D-Gal-(1-&gt;4)-beta-D-GlcNAc-(1-&gt;3)-beta-D-Gal-(1-&gt;4)-[alpha-L-Fuc-(1-&gt;3)]-beta-D-GlcNAc derivative + GDP-beta-L-fucose = an alpha-Neu5Ac-(2-&gt;3)-beta-D-Gal-(1-&gt;4)-[alpha-L-Fuc-(1-&gt;3)]-beta-D-GlcNAc-(1-&gt;3)-beta-D-Gal-(1-&gt;4)-[alpha-L-Fuc-(1-&gt;3)]-beta-D-GlcNAc derivative + GDP + H(+). It carries out the reaction a beta-D-galactosyl-(1-&gt;4)-N-acetyl-beta-D-glucosaminyl derivative + GDP-beta-L-fucose = a beta-D-galactosyl-(1-&gt;4)-[alpha-L-fucosyl-(1-&gt;3)]-N-acetyl-beta-D-glucosaminyl derivative + GDP + H(+). The catalysed reaction is a neolactoside nLc4Cer + GDP-beta-L-fucose = a neolactoside III(3)-alpha-Fuc-nLc4Cer + GDP + H(+). It catalyses the reaction a neolactoside nLc6Cer + GDP-beta-L-fucose = beta-D-galactosyl-(1-&gt;4)-N-acetyl-beta-D-glucosaminyl-(1-&gt;3)-beta-D-galactosyl-(1-&gt;4)-[alpha-L-fucosyl-(1-&gt;3)]-N-acetyl-beta-D-glucosaminyl-(1-&gt;3)-beta-D-galactosyl-(1-&gt;4)-beta-D-glucosyl-(1&lt;-&gt;1')-ceramide + GDP + H(+). The enzyme catalyses a neolactoside nLc6Cer(d18:1(4E)) + GDP-beta-L-fucose = a neolactoside III(3)-alpha-Fuc-nLc6Cer(d18:1(4E)) + GDP + H(+). It carries out the reaction a neolactoside nLc4Cer(d18:1(4E)) + GDP-beta-L-fucose = a neolactoside III(3)-alpha-Fuc-nLc4Cer(d18:1(4E)) + GDP + H(+). The catalysed reaction is a neolactoside VI(3)-alpha-NeuNAc-nLc6Cer + GDP-beta-L-fucose = a neolactoside VI(3)-alpha-NeuAc,III(3)-alphaFuc-nLc6Cer + GDP + H(+). It catalyses the reaction beta-D-galactosyl-(1-&gt;4)-N-acetyl-D-glucosamine + GDP-beta-L-fucose = beta-D-galactosyl-(1-&gt;4)-[alpha-L-fucosyl-(1-&gt;3)]-N-acetyl-D-glucosamine + GDP + H(+). The enzyme catalyses N-acetyl-alpha-neuraminosyl-(2-&gt;3)-beta-D-galactosyl-(1-&gt;4)-N-acetyl-beta-D-glucosamine + GDP-beta-L-fucose = N-acetyl-alpha-neuraminosyl-(2-&gt;3)-beta-D-galactosyl-(1-&gt;4)-[alpha-L-fucosyl-(1-&gt;3)]-N-acetyl-beta-D-glucosamine + GDP + H(+). It carries out the reaction alpha-L-Fuc-(1-&gt;2)-beta-D-Gal-(1-&gt;4)-D-GlcNAc + GDP-beta-L-fucose = alpha-L-Fuc-(1-&gt;2)-beta-D-Gal-(1-&gt;4)-[alpha-L-Fuc-(1-&gt;3)]-D-GlcNAc + GDP + H(+). The catalysed reaction is an alpha-Neu5Ac-(2-&gt;3)-beta-D-Gal-(1-&gt;3)-D-GlcNAc derivative + GDP-beta-L-fucose = an alpha-Neu5Ac-(2-&gt;3)-beta-D-Gal-(1-&gt;3)-[alpha-L-Fuc-(1-&gt;4)]-beta-D-GlcNAc derivative + GDP + H(+). Its pathway is protein modification; protein glycosylation. In terms of biological role, catalyzes preferentially the transfer of L-fucose, from a guanosine diphosphate-beta-L-fucose, to the N-acetyl-beta-D-glucosamine (GlcNAc) of an N-acetyllactosamine unit (type 2 chain) of an oligosaccharide, or a glycoprotein- and a glycolipid-linked N-acetyllactosamine unit via an alpha (1,3) linkage and participates in the surface expression of VIM-2, Lewis X/SSEA-1 and sialyl Lewis X antigens. Preferentially transfers fucose to the GlcNAc of an internal N-acetyllactosamine unit of a poly-N-acetyllactosamine chain acceptor substrate. Also catalyzes to a lesser extend the transfer of L-fucose to the GlcNAc of a type 1 (beta-D-galactosyl-(1-&gt;3)-N-acetyl-beta-D-glucosaminyl) or H-type 1 (alpha-L-Fuc-(1-&gt;2)-beta-D-Gal-(1-&gt;3)-D-GlcNAc) chain oligosaccharide via an alpha (1,4) linkage. Preferentially catalyzes sialylated type 2 oligosaccharide acceptors over neutral type 2 or H type 2 (alpha-L-Fuc-(1-&gt;2)-beta-D-Gal-(1-&gt;4)-D-GlcNAc) oligosaccharide acceptors. Lactose-based structures are also acceptor substrates. This chain is 4-galactosyl-N-acetylglucosaminide 3-alpha-L-fucosyltransferase FUT5, found in Gorilla gorilla gorilla (Western lowland gorilla).